The primary structure comprises 446 residues: Tubulin beta-1 chain (446 aa).

8 residues coordinate GTP: Q11, E69, S138, G142, T143, G144, N204, and N226. E69 is a Mg(2+) binding site.

This sequence belongs to the tubulin family. As to quaternary structure, dimer of alpha and beta chains. A typical microtubule is a hollow water-filled tube with an outer diameter of 25 nm and an inner diameter of 15 nM. Alpha-beta heterodimers associate head-to-tail to form protofilaments running lengthwise along the microtubule wall with the beta-tubulin subunit facing the microtubule plus end conferring a structural polarity. Microtubules usually have 13 protofilaments but different protofilament numbers can be found in some organisms and specialized cells. It depends on Mg(2+) as a cofactor.

It is found in the cytoplasm. It localises to the cytoskeleton. In terms of biological role, tubulin is the major constituent of microtubules, a cylinder consisting of laterally associated linear protofilaments composed of alpha- and beta-tubulin heterodimers. Microtubules grow by the addition of GTP-tubulin dimers to the microtubule end, where a stabilizing cap forms. Below the cap, tubulin dimers are in GDP-bound state, owing to GTPase activity of alpha-tubulin. The polypeptide is Tubulin beta-1 chain (TUBB1) (Suillus bovinus (Jersey cow bolete)).